The chain runs to 144 residues: Deoxyuridine 5'-triphosphate nucleotidohydrolase (144 aa).

Residues 63–65, Asn76, and 80–82 contribute to the substrate site; these read RSG and TID.

The protein belongs to the dUTPase family. Mg(2+) is required as a cofactor.

The enzyme catalyses dUTP + H2O = dUMP + diphosphate + H(+). Its pathway is pyrimidine metabolism; dUMP biosynthesis; dUMP from dCTP (dUTP route): step 2/2. This enzyme is involved in nucleotide metabolism: it produces dUMP, the immediate precursor of thymidine nucleotides and it decreases the intracellular concentration of dUTP so that uracil cannot be incorporated into DNA. The chain is Deoxyuridine 5'-triphosphate nucleotidohydrolase from Porphyromonas gingivalis (strain ATCC 33277 / DSM 20709 / CIP 103683 / JCM 12257 / NCTC 11834 / 2561).